A 227-amino-acid polypeptide reads, in one-letter code: ATP-dependent dethiobiotin synthetase BioD (227 aa).

Residue D13 to T18 coordinates ATP. Position 17 (T17) interacts with Mg(2+). K38 is a catalytic residue. Residues D55, E118–G121, N178–R179, P207–I209, and E214 each bind ATP. Mg(2+) contacts are provided by D55 and E118.

The protein belongs to the dethiobiotin synthetase family. Homodimer. The cofactor is Mg(2+).

It localises to the cytoplasm. It catalyses the reaction (7R,8S)-7,8-diammoniononanoate + CO2 + ATP = (4R,5S)-dethiobiotin + ADP + phosphate + 3 H(+). It functions in the pathway cofactor biosynthesis; biotin biosynthesis; biotin from 7,8-diaminononanoate: step 1/2. In terms of biological role, catalyzes a mechanistically unusual reaction, the ATP-dependent insertion of CO2 between the N7 and N8 nitrogen atoms of 7,8-diaminopelargonic acid (DAPA, also called 7,8-diammoniononanoate) to form a ureido ring. This Tolumonas auensis (strain DSM 9187 / NBRC 110442 / TA 4) protein is ATP-dependent dethiobiotin synthetase BioD.